The primary structure comprises 216 residues: uncharacterized protein (216 aa).

The interval 55 to 216 (NEDKAEAMSN…NEKEKDVNPK (162 aa)) is disordered. Basic and acidic residues-rich tracts occupy residues 134 to 152 (LTEK…DNHV), 177 to 187 (KINDKSDDTLH), and 207 to 216 (NEKEKDVNPK).

This is an uncharacterized protein from Caenorhabditis elegans.